The primary structure comprises 611 residues: Oxidoreductase cicC (611 aa).

The N-terminal stretch at 1–20 (MALRYLNKFSLLSLAVPTLA) is a signal peptide. FAD-binding positions include 45–46 (NA) and 65–66 (EA). 2 N-linked (GlcNAc...) asparagine glycosylation sites follow: N76 and N113. FAD contacts are provided by residues V123 and 131 to 134 (NLMT). N-linked (GlcNAc...) asparagine glycosylation is found at N282, N410, and N475. The active-site Proton acceptor is the H547. H547 acts as the Proton donor in catalysis. FAD is bound at residue A581. H591 serves as the catalytic Proton acceptor. FAD is bound at residue 592–593 (PI).

Belongs to the GMC oxidoreductase family. FAD is required as a cofactor.

It functions in the pathway phytotoxin biosynthesis. Oxidoreductase; part of the gene cluster that mediates the biosynthesis of cichorine, a phytotoxin active against knapweed, corn, and soybeans. The first step in the pathway is performed by the non-reducing polyketide synthase pkbA that condenses one acetyl-CoA starter unit with 3 malonyl-CoA units. PkbA also catalyzes one methylation step to produce 3-methylorsellinate. The nonribosomal peptide synthase-like protein cicB, the cytochrome P450 monooxygenase cicH and the O-methyltransferase cicE are involved in the conversion of 3-methylorsellinate into nidulol. CicB converts 3-methylorsellinate to a yet unidentified intermediate, cicH may play a ring-closing role for cichorine and cicE is plausibly responsible for the methylation of one of the phenol groups. The oxidoreductase cicC acts downstream with still unidentified enzymes to further convert nidulol into cichorine. In Emericella nidulans (strain FGSC A4 / ATCC 38163 / CBS 112.46 / NRRL 194 / M139) (Aspergillus nidulans), this protein is Oxidoreductase cicC.